Here is a 153-residue protein sequence, read N- to C-terminus: Large ribosomal subunit protein uL15 (153 aa).

The protein belongs to the universal ribosomal protein uL15 family. As to quaternary structure, part of the 50S ribosomal subunit.

Its function is as follows. Binds to the 23S rRNA. The sequence is that of Large ribosomal subunit protein uL15 from Pelagibacter ubique (strain HTCC1062).